We begin with the raw amino-acid sequence, 79 residues long: Acyl carrier protein (79 aa).

A Carrier domain is found at 2 to 77; sequence STIEERVKKI…QAIDYVKAHV (76 aa). O-(pantetheine 4'-phosphoryl)serine is present on serine 37.

The protein belongs to the acyl carrier protein (ACP) family. 4'-phosphopantetheine is transferred from CoA to a specific serine of apo-ACP by AcpS. This modification is essential for activity because fatty acids are bound in thioester linkage to the sulfhydryl of the prosthetic group.

The protein localises to the cytoplasm. It functions in the pathway lipid metabolism; fatty acid biosynthesis. Functionally, carrier of the growing fatty acid chain in fatty acid biosynthesis. In Xanthomonas axonopodis pv. citri (strain 306), this protein is Acyl carrier protein.